The following is a 470-amino-acid chain: Retinoic acid receptor RXR-gamma (470 aa).

Residues Met-1 to Ile-145 are modulating. 2 consecutive NR C4-type zinc fingers follow at residues Cys-146–Cys-166 and Cys-182–Cys-206. Residues Cys-146 to Met-211 constitute a DNA-binding region (nuclear receptor). The segment at Lys-212–Ser-235 is hinge. Positions Gln-217–Thr-229 are enriched in basic and acidic residues. A disordered region spans residues Gln-217–Pro-242. Residues Ser-238–Pro-466 form the NR LBD domain.

Belongs to the nuclear hormone receptor family. NR2 subfamily. In terms of assembly, homodimer. Heterodimer; with a rar molecule. Binds DNA preferentially as a rar/rxr heterodimer.

It localises to the nucleus. Receptor for retinoic acid. Retinoic acid receptors bind as heterodimers to their target response elements in response to their ligands, all-trans or 9-cis retinoic acid, and regulate gene expression in various biological processes. The rar/rxr heterodimers bind to the retinoic acid response elements (RARE) composed of tandem 5'-AGGTCA-3' sites known as DR1-DR5. The high affinity ligand for rxrs is 9-cis retinoic acid. The polypeptide is Retinoic acid receptor RXR-gamma (rxrg) (Xenopus laevis (African clawed frog)).